A 128-amino-acid polypeptide reads, in one-letter code: Aspartate 1-decarboxylase (128 aa).

The active-site Schiff-base intermediate with substrate; via pyruvic acid is Ser-25. Ser-25 is subject to Pyruvic acid (Ser). Residue Thr-57 participates in substrate binding. The Proton donor role is filled by Tyr-58. 73 to 75 (GSA) serves as a coordination point for substrate.

This sequence belongs to the PanD family. Heterooctamer of four alpha and four beta subunits. Requires pyruvate as cofactor. In terms of processing, is synthesized initially as an inactive proenzyme, which is activated by self-cleavage at a specific serine bond to produce a beta-subunit with a hydroxyl group at its C-terminus and an alpha-subunit with a pyruvoyl group at its N-terminus.

The protein localises to the cytoplasm. It catalyses the reaction L-aspartate + H(+) = beta-alanine + CO2. The protein operates within cofactor biosynthesis; (R)-pantothenate biosynthesis; beta-alanine from L-aspartate: step 1/1. In terms of biological role, catalyzes the pyruvoyl-dependent decarboxylation of aspartate to produce beta-alanine. This is Aspartate 1-decarboxylase from Burkholderia cenocepacia (strain ATCC BAA-245 / DSM 16553 / LMG 16656 / NCTC 13227 / J2315 / CF5610) (Burkholderia cepacia (strain J2315)).